Consider the following 210-residue polypeptide: Uracil phosphoribosyltransferase (210 aa).

5-phospho-alpha-D-ribose 1-diphosphate contacts are provided by residues Arg-78, Arg-103, and 130 to 138 (DPMLATGGT). Uracil is bound by residues Ile-193 and 198–200 (GDA). Residue Asp-199 participates in 5-phospho-alpha-D-ribose 1-diphosphate binding.

This sequence belongs to the UPRTase family. The cofactor is Mg(2+).

It carries out the reaction UMP + diphosphate = 5-phospho-alpha-D-ribose 1-diphosphate + uracil. The protein operates within pyrimidine metabolism; UMP biosynthesis via salvage pathway; UMP from uracil: step 1/1. With respect to regulation, allosterically activated by GTP. Functionally, catalyzes the conversion of uracil and 5-phospho-alpha-D-ribose 1-diphosphate (PRPP) to UMP and diphosphate. This is Uracil phosphoribosyltransferase from Xanthomonas euvesicatoria pv. vesicatoria (strain 85-10) (Xanthomonas campestris pv. vesicatoria).